The sequence spans 308 residues: Phosphoribosylaminoimidazole-succinocarboxamide synthase (308 aa).

The protein belongs to the SAICAR synthetase family.

The enzyme catalyses 5-amino-1-(5-phospho-D-ribosyl)imidazole-4-carboxylate + L-aspartate + ATP = (2S)-2-[5-amino-1-(5-phospho-beta-D-ribosyl)imidazole-4-carboxamido]succinate + ADP + phosphate + 2 H(+). The protein operates within purine metabolism; IMP biosynthesis via de novo pathway; 5-amino-1-(5-phospho-D-ribosyl)imidazole-4-carboxamide from 5-amino-1-(5-phospho-D-ribosyl)imidazole-4-carboxylate: step 1/2. This is Phosphoribosylaminoimidazole-succinocarboxamide synthase from Xanthomonas oryzae pv. oryzae (strain PXO99A).